Here is a 327-residue protein sequence, read N- to C-terminus: E3 ubiquitin ligase Rnf121 (327 aa).

Transmembrane regions (helical) follow at residues 50–70 (MHAE…LLLV), 79–96 (SYNM…VYFT), 99–119 (LHWW…AYIT), 148–168 (ATGI…NLLF), and 173–193 (EDAM…GVLG). Residues 226–276 (CAVCGQQIFVDVNEEGIIENTYRLSCNHVFHEFCIRGWCIVGKKQTCPYCK) form an RING-type; atypical zinc finger.

It belongs to the RNF121 family.

It localises to the endoplasmic reticulum membrane. The enzyme catalyses S-ubiquitinyl-[E2 ubiquitin-conjugating enzyme]-L-cysteine + [acceptor protein]-L-lysine = [E2 ubiquitin-conjugating enzyme]-L-cysteine + N(6)-ubiquitinyl-[acceptor protein]-L-lysine.. It participates in protein modification; protein ubiquitination. Functionally, E3 ubiquitin ligase which accepts ubiquitin and transfers it to substrates thereby promoting their degradation by the endoplasmic reticulum-associated degradation (ERAD) pathway which is a pathway involved in ubiquitin-dependent degradation of misfolded endoplasmic reticulum proteins. May regulate the unfolded protein response to reduce endoplasmic reticulum stress. The protein is E3 ubiquitin ligase Rnf121 (rnf121) of Xenopus laevis (African clawed frog).